The primary structure comprises 264 residues: Thymidylate synthase (264 aa).

Arg-21 lines the dUMP pocket. His-51 contributes to the (6R)-5,10-methylene-5,6,7,8-tetrahydrofolate binding site. Residue Arg-126–Arg-127 participates in dUMP binding. Cys-146 acts as the Nucleophile in catalysis. DUMP-binding positions include Arg-166 to Asp-169, Asn-177, and His-207 to Tyr-209. Asp-169 contacts (6R)-5,10-methylene-5,6,7,8-tetrahydrofolate. Ala-263 provides a ligand contact to (6R)-5,10-methylene-5,6,7,8-tetrahydrofolate.

Belongs to the thymidylate synthase family. Bacterial-type ThyA subfamily. As to quaternary structure, homodimer.

It is found in the cytoplasm. The catalysed reaction is dUMP + (6R)-5,10-methylene-5,6,7,8-tetrahydrofolate = 7,8-dihydrofolate + dTMP. It participates in pyrimidine metabolism; dTTP biosynthesis. Functionally, catalyzes the reductive methylation of 2'-deoxyuridine-5'-monophosphate (dUMP) to 2'-deoxythymidine-5'-monophosphate (dTMP) while utilizing 5,10-methylenetetrahydrofolate (mTHF) as the methyl donor and reductant in the reaction, yielding dihydrofolate (DHF) as a by-product. This enzymatic reaction provides an intracellular de novo source of dTMP, an essential precursor for DNA biosynthesis. The protein is Thymidylate synthase of Methylobacillus flagellatus (strain ATCC 51484 / DSM 6875 / VKM B-1610 / KT).